Here is a 452-residue protein sequence, read N- to C-terminus: Transcription factor PERIANTHIA (452 aa).

Residues 164-227 (DQRTLRRLAQ…RGVSADHTHL (64 aa)) form the bZIP domain. Residues 166-186 (RTLRRLAQNREAARKSRLRKK) form a basic motif region. A leucine-zipper region spans residues 192–206 (LENSRIRLAQLEEEL). A DOG1 domain is found at 233–449 (VFSFELEYTR…RALSSLWLAR (217 aa)).

The protein belongs to the bZIP family. As to quaternary structure, interacts with GRXC7/ROXY1. Interacts with BOP1 and BOP2.

The protein resides in the nucleus. Transcriptional activator involved in the determination of floral organ number. Acts to determine floral organ patterning by establishing floral organ primordia in specific numbers and positions. Plays a role in regulating stem cell fate by directly controlling AG expression. Binds to the 5'-AAGAAT-3' cis-acting element found in AG promoter. Might represent a target for a post-translational modification by GRXC7/ROXY1. The protein is Transcription factor PERIANTHIA (PAN) of Arabidopsis thaliana (Mouse-ear cress).